A 308-amino-acid polypeptide reads, in one-letter code: 4-hydroxyproline 2-epimerase (308 aa).

Cys88 (proton acceptor) is an active-site residue. Substrate contacts are provided by residues 89–90 (GH), His208, and Asp232. Cys236 acts as the Proton donor in catalysis. 237 to 238 (GT) is a binding site for substrate.

The protein belongs to the proline racemase family.

It carries out the reaction trans-4-hydroxy-L-proline = cis-4-hydroxy-D-proline. Catalyzes the epimerization of trans-4-hydroxy-L-proline (t4LHyp) to cis-4-hydroxy-D-proline (c4DHyp). Is likely involved in a degradation pathway that converts t4LHyp to alpha-ketoglutarate. Can also catalyze the epimerization of trans-3-hydroxy-L-proline (t3LHyp) to cis-3-hydroxy-D-proline (c3DHyp), albeit with 200-fold lower efficiency. This is 4-hydroxyproline 2-epimerase from Pseudomonas putida (strain ATCC 700007 / DSM 6899 / JCM 31910 / BCRC 17059 / LMG 24140 / F1).